Reading from the N-terminus, the 460-residue chain is MFS-type transporter PUL3 (460 aa).

Transmembrane regions (helical) follow at residues 16–36, 50–70, 81–101, 113–133, 151–171, 181–201, 240–260, and 271–291; these read AVTL…SSVV, YLFI…FIIG, WVII…SCAG, IICG…TAIS, GICM…DFTV, APTF…MFVL, MFLS…FLTL, and VAFM…PDLV. Residues 300-323 form a disordered region; that stretch reads PSTQDETDTSDNDKIEKEESEQKS. The segment covering 310–323 has biased composition (basic and acidic residues); it reads DNDKIEKEESEQKS. The next 4 helical transmembrane spans lie at 333–353, 369–389, 408–428, and 433–453; these read VSLT…MIGA, IFFT…GSSV, FIGA…AALY, and GLPI…PSLV.

The protein belongs to the major facilitator superfamily. TCR/Tet family.

The protein resides in the cell membrane. MFS-type transporer required for the uptake of iron via the uptake of the siderophore pulcherrimin-iron complex. This chain is MFS-type transporter PUL3, found in Kluyveromyces lactis (strain ATCC 8585 / CBS 2359 / DSM 70799 / NBRC 1267 / NRRL Y-1140 / WM37) (Yeast).